A 139-amino-acid polypeptide reads, in one-letter code: Actin-depolymerizing factor 1 (139 aa).

Residues 5–139 (ASGMAVHDDC…DLDVFRSRAN (135 aa)) enclose the ADF-H domain. Ser-6 bears the Phosphoserine; by CPK3 mark.

It belongs to the actin-binding proteins ADF family. As to quaternary structure, interacts with the 14-3-3-like protein GRF6/AFT1. Post-translationally, phosphorylation at Ser-6 by CPK3/CDPK6 inhibits actin-depolimerizing activity. As to expression, expressed in vascular tissues of all organs.

The protein resides in the cytoplasm. Its subcellular location is the cytoskeleton. In terms of biological role, actin-depolymerizing protein. Stimulates F-actin depolymerization. Involved in plant development, cell organ expansion and flowering by controlling breakdown of thick actin cables. Severs actin filaments or bundles and promotes actin cytoskeleton disassembly. Binds monomeric actin (G-actin) with a marked preference for the ADP-loaded form and inhibits the rate of nucleotide exchange on G-actin. The polypeptide is Actin-depolymerizing factor 1 (ADF1) (Arabidopsis thaliana (Mouse-ear cress)).